Reading from the N-terminus, the 429-residue chain is Enolase (429 aa).

Q168 serves as a coordination point for (2R)-2-phosphoglycerate. E210 serves as the catalytic Proton donor. Mg(2+) is bound by residues D247, E288, and D315. 4 residues coordinate (2R)-2-phosphoglycerate: K340, R369, S370, and K391. The Proton acceptor role is filled by K340.

It belongs to the enolase family. It depends on Mg(2+) as a cofactor.

It localises to the cytoplasm. The protein resides in the secreted. Its subcellular location is the cell surface. The enzyme catalyses (2R)-2-phosphoglycerate = phosphoenolpyruvate + H2O. It functions in the pathway carbohydrate degradation; glycolysis; pyruvate from D-glyceraldehyde 3-phosphate: step 4/5. Functionally, catalyzes the reversible conversion of 2-phosphoglycerate (2-PG) into phosphoenolpyruvate (PEP). It is essential for the degradation of carbohydrates via glycolysis. This Nostoc sp. (strain PCC 7120 / SAG 25.82 / UTEX 2576) protein is Enolase.